A 646-amino-acid chain; its full sequence is EF-hand calcium-binding domain-containing protein 6 (646 aa).

EF-hand domains are found at residues 1 to 27 (FLET…FDIP), 28 to 63 (LTPR…NYSP), 109 to 144 (DCYQ…CGCS), 214 to 249 (SSQL…FCHK), 321 to 356 (SHYH…NVQI), and 357 to 392 (LTDE…ERAA). Residue threonine 29 is modified to Phosphothreonine. The tract at residues 390 to 452 (RAATPTATGD…TTAIPGTPPL (63 aa)) is disordered. Residues 432-446 (KPQSHPCTAASTTAI) are compositionally biased toward polar residues. Serine 435 bears the Phosphoserine mark. A phosphothreonine mark is found at threonine 439 and threonine 449. The interval 448–646 (GTPPLQNCDP…YNDFLRAFLQ (199 aa)) is interaction with PARK7. 4 EF-hand domains span residues 468 to 503 (GCWR…FNLD), 504 to 539 (ISKE…LLKA), 579 to 614 (HCWR…YSIN), and 615 to 646 (LSEE…AFLQ). Residues 552 to 646 (NAHKMKDSGA…YNDFLRAFLQ (95 aa)) are interaction with AR.

Microtubule inner protein component of sperm flagellar doublet microtubules. Binds PARK7. Part of a ternary complex containing PARK7, EFCAB6/DJBP and AR.

The protein localises to the nucleus. It localises to the cytoplasm. Its subcellular location is the cytoskeleton. It is found in the flagellum axoneme. Its function is as follows. Negatively regulates the androgen receptor by recruiting histone deacetylase complex, and protein DJ-1 antagonizes this inhibition by abrogation of this complex. Microtubule inner protein (MIP) part of the dynein-decorated doublet microtubules (DMTs) in cilia axoneme, which is required for motile cilia beating. The chain is EF-hand calcium-binding domain-containing protein 6 (EFCAB6) from Macaca fascicularis (Crab-eating macaque).